We begin with the raw amino-acid sequence, 284 residues long: Bifunctional protein FolD (284 aa).

NADP(+)-binding positions include 166 to 168 and S191; that span reads GRS.

The protein belongs to the tetrahydrofolate dehydrogenase/cyclohydrolase family. In terms of assembly, homodimer.

The catalysed reaction is (6R)-5,10-methylene-5,6,7,8-tetrahydrofolate + NADP(+) = (6R)-5,10-methenyltetrahydrofolate + NADPH. It catalyses the reaction (6R)-5,10-methenyltetrahydrofolate + H2O = (6R)-10-formyltetrahydrofolate + H(+). Its pathway is one-carbon metabolism; tetrahydrofolate interconversion. Catalyzes the oxidation of 5,10-methylenetetrahydrofolate to 5,10-methenyltetrahydrofolate and then the hydrolysis of 5,10-methenyltetrahydrofolate to 10-formyltetrahydrofolate. This is Bifunctional protein FolD from Delftia acidovorans (strain DSM 14801 / SPH-1).